The following is a 288-amino-acid chain: Energy-coupling factor transporter ATP-binding protein EcfA2 (288 aa).

An ABC transporter domain is found at 3 to 245 (IEFKNVDYIY…PDWLKKHFLD (243 aa)). Position 40–47 (40–47 (GHTGSGKS)) interacts with ATP.

This sequence belongs to the ABC transporter superfamily. Energy-coupling factor EcfA family. As to quaternary structure, forms a stable energy-coupling factor (ECF) transporter complex composed of 2 membrane-embedded substrate-binding proteins (S component), 2 ATP-binding proteins (A component) and 2 transmembrane proteins (T component).

The protein resides in the cell membrane. In terms of biological role, ATP-binding (A) component of a common energy-coupling factor (ECF) ABC-transporter complex. Unlike classic ABC transporters this ECF transporter provides the energy necessary to transport a number of different substrates. In Lactobacillus gasseri (strain ATCC 33323 / DSM 20243 / BCRC 14619 / CIP 102991 / JCM 1131 / KCTC 3163 / NCIMB 11718 / NCTC 13722 / AM63), this protein is Energy-coupling factor transporter ATP-binding protein EcfA2.